The chain runs to 88 residues: Small ribosomal subunit protein uS17 (88 aa).

The protein belongs to the universal ribosomal protein uS17 family. Part of the 30S ribosomal subunit.

In terms of biological role, one of the primary rRNA binding proteins, it binds specifically to the 5'-end of 16S ribosomal RNA. This is Small ribosomal subunit protein uS17 from Nitrosospira multiformis (strain ATCC 25196 / NCIMB 11849 / C 71).